We begin with the raw amino-acid sequence, 499 residues long: L-arabinose isomerase (499 aa).

Mn(2+)-binding residues include Glu306, Glu333, His350, and His449.

It belongs to the arabinose isomerase family. Requires Mn(2+) as cofactor.

It catalyses the reaction beta-L-arabinopyranose = L-ribulose. It participates in carbohydrate degradation; L-arabinose degradation via L-ribulose; D-xylulose 5-phosphate from L-arabinose (bacterial route): step 1/3. Its function is as follows. Catalyzes the conversion of L-arabinose to L-ribulose. The chain is L-arabinose isomerase from Aeromonas salmonicida (strain A449).